Here is a 254-residue protein sequence, read N- to C-terminus: Alcohol dehydrogenase (254 aa).

10 to 33 contributes to the NAD(+) binding site; the sequence is FVAGLGGIGLDTSRELVKRNLKNL. Ser138 is a binding site for substrate. The active-site Proton acceptor is the Tyr151.

The protein belongs to the short-chain dehydrogenases/reductases (SDR) family. Homodimer.

It catalyses the reaction a primary alcohol + NAD(+) = an aldehyde + NADH + H(+). It carries out the reaction a secondary alcohol + NAD(+) = a ketone + NADH + H(+). In Drosophila persimilis (Fruit fly), this protein is Alcohol dehydrogenase (Adh).